A 577-amino-acid polypeptide reads, in one-letter code: MSEKYVFSEKHPGPLVVEGKLTDAERMKTESNFLRGTIAEDLNDGLTGGFKGDNFLLIRFHGMYQQDDRDIRAERAEQKLEPRHAMLLRCRLPGGVMTPEQWLRIDKFAGESTIYGSIRITNRQTFQYHGILKSNVKPVHQMLNSIGLDALATANDMNRNVLCTSNPIESELHQQAYEWAKKISEHLLPRTRAYAEIWMDQEKVATTDEEPILGSTYLPRKFKTTVVVPPQNDVDLHANDLNFIAIADNGRLVGFNVLVGGGLSIAHGDKATYPRTASELGYISIEHTLAIAEAVVTTQRDWGNRTNRKNAKTKYTLERVGVDNFKQEVEARAGVKFEAVRPYEFTGRGDRIGWVKGIDNKWHLTLFIENGRILDYPGRPLKTGLAEIAKIHKGDFRLTANQNLIIAGVPARSKAKIDALAREHGLIDDSVSEQRKNSMACVSFPTCPLAMAEAERFLPEFVTKVEDIMQQHGVGDEHIVLRVTGCPNGCGRAMLAEIGLVGKAVGRYNLHLGGNREGTRIPRMYRENINETEILAEIDRLIGLWAQDRQPNEGFGDFTIRTNIIRPVLDPARDFYD.

Cysteine 441, cysteine 447, cysteine 486, and cysteine 490 together coordinate [4Fe-4S] cluster. Cysteine 490 is a binding site for siroheme.

It belongs to the nitrite and sulfite reductase 4Fe-4S domain family. Alpha(8)-beta(8). The alpha component is a flavoprotein, the beta component is a hemoprotein. The cofactor is siroheme. [4Fe-4S] cluster serves as cofactor.

It catalyses the reaction hydrogen sulfide + 3 NADP(+) + 3 H2O = sulfite + 3 NADPH + 4 H(+). It participates in sulfur metabolism; hydrogen sulfide biosynthesis; hydrogen sulfide from sulfite (NADPH route): step 1/1. In terms of biological role, component of the sulfite reductase complex that catalyzes the 6-electron reduction of sulfite to sulfide. This is one of several activities required for the biosynthesis of L-cysteine from sulfate. The polypeptide is Sulfite reductase [NADPH] hemoprotein beta-component 2 (Pectobacterium carotovorum subsp. carotovorum (strain PC1)).